A 279-amino-acid polypeptide reads, in one-letter code: Non-structural maintenance of chromosomes element 3 homolog (279 aa).

The disordered stretch occupies residues 1–52 (MLQKPRGRGRPSTQADPERDWGGAGEEGPSTSRAAGGSSQGSRASLSAPTVG). Low complexity predominate over residues 30-48 (STSRAAGGSSQGSRASLSA). S38 carries the phosphoserine modification. An interaction with NSMCE1 region spans residues 52-279 (GPRTQKQLEL…ATASAPATSS (228 aa)). The 201-residue stretch at 59-259 (LELKVAELVQ…KDWPTQYCEA (201 aa)) folds into the MAGE domain.

Component of the SMC5-SMC6 complex which consists at least of SMC5, SMC6, NSMCE2, NSMCE1, NSMCE4A or EID3 and NSMCE3. NSMCE1, NSMCE4A or EID3 and NSMCE3 probably form a subcomplex that bridges the head domains of the SMC5:SMC6 heterodimer. Interacts with PJA1. Interacts with E2F1 (via C-terminus). Interacts with NGFR (via C-terminus). Interacts with NSMCE1. Interacts with NSMCE4. Interacts with SMC6. Interacts with EID3. In terms of tissue distribution, ubiquitous.

It localises to the cytoplasm. The protein resides in the nucleus. Its subcellular location is the chromosome. The protein localises to the telomere. Component of the SMC5-SMC6 complex, a complex involved in repair of DNA double-strand breaks by homologous recombination. The complex may promote sister chromatid homologous recombination by recruiting the SMC1-SMC3 cohesin complex to double-strand breaks. The complex is required for telomere maintenance via recombination in ALT (alternative lengthening of telomeres) cell lines and mediates sumoylation of shelterin complex (telosome) components which is proposed to lead to shelterin complex disassembly in ALT-associated PML bodies (APBs). In vitro enhances ubiquitin ligase activity of NSMCE1. Proposed to act through recruitment and/or stabilization of the Ubl-conjugating enzyme (E2) at the E3:substrate complex. May be a growth suppressor that facilitates the entry of the cell into cell cycle arrest. This is Non-structural maintenance of chromosomes element 3 homolog (Nsmce3) from Mus musculus (Mouse).